The following is a 309-amino-acid chain: Porphobilinogen deaminase (309 aa).

Residue Cys-241 is modified to S-(dipyrrolylmethanemethyl)cysteine.

It belongs to the HMBS family. Monomer. Dipyrromethane is required as a cofactor.

The catalysed reaction is 4 porphobilinogen + H2O = hydroxymethylbilane + 4 NH4(+). Its pathway is porphyrin-containing compound metabolism; protoporphyrin-IX biosynthesis; coproporphyrinogen-III from 5-aminolevulinate: step 2/4. Functionally, tetrapolymerization of the monopyrrole PBG into the hydroxymethylbilane pre-uroporphyrinogen in several discrete steps. This is Porphobilinogen deaminase from Oceanobacillus iheyensis (strain DSM 14371 / CIP 107618 / JCM 11309 / KCTC 3954 / HTE831).